Here is a 120-residue protein sequence, read N- to C-terminus: Ribosome-binding factor A (120 aa).

Belongs to the RbfA family. As to quaternary structure, monomer. Binds 30S ribosomal subunits, but not 50S ribosomal subunits or 70S ribosomes.

Its subcellular location is the cytoplasm. Functionally, one of several proteins that assist in the late maturation steps of the functional core of the 30S ribosomal subunit. Associates with free 30S ribosomal subunits (but not with 30S subunits that are part of 70S ribosomes or polysomes). Required for efficient processing of 16S rRNA. May interact with the 5'-terminal helix region of 16S rRNA. The polypeptide is Ribosome-binding factor A (Chlamydia pneumoniae (Chlamydophila pneumoniae)).